The following is a 123-amino-acid chain: Ribonuclease P protein component (123 aa).

It belongs to the RnpA family. Consists of a catalytic RNA component (M1 or rnpB) and a protein subunit.

The catalysed reaction is Endonucleolytic cleavage of RNA, removing 5'-extranucleotides from tRNA precursor.. Functionally, RNaseP catalyzes the removal of the 5'-leader sequence from pre-tRNA to produce the mature 5'-terminus. It can also cleave other RNA substrates such as 4.5S RNA. The protein component plays an auxiliary but essential role in vivo by binding to the 5'-leader sequence and broadening the substrate specificity of the ribozyme. The chain is Ribonuclease P protein component from Bordetella petrii (strain ATCC BAA-461 / DSM 12804 / CCUG 43448).